The following is a 427-amino-acid chain: Adenylosuccinate synthetase (427 aa).

GTP-binding positions include 12–18 (GDEGKGK) and 40–42 (GHT). Asp-13 functions as the Proton acceptor in the catalytic mechanism. Residues Asp-13 and Gly-40 each contribute to the Mg(2+) site. Residues 13-16 (DEGK), 38-41 (NAGH), Thr-128, Arg-142, Gln-223, Thr-238, and Arg-302 contribute to the IMP site. His-41 functions as the Proton donor in the catalytic mechanism. 298–304 (TTTGRPR) is a binding site for substrate. GTP is bound by residues Arg-304, 330-332 (SID), and 412-414 (SVG).

Belongs to the adenylosuccinate synthetase family. Homodimer. It depends on Mg(2+) as a cofactor.

Its subcellular location is the cytoplasm. It carries out the reaction IMP + L-aspartate + GTP = N(6)-(1,2-dicarboxyethyl)-AMP + GDP + phosphate + 2 H(+). It functions in the pathway purine metabolism; AMP biosynthesis via de novo pathway; AMP from IMP: step 1/2. Plays an important role in the de novo pathway of purine nucleotide biosynthesis. Catalyzes the first committed step in the biosynthesis of AMP from IMP. In Staphylococcus epidermidis (strain ATCC 12228 / FDA PCI 1200), this protein is Adenylosuccinate synthetase.